A 954-amino-acid polypeptide reads, in one-letter code: Endoplasmic reticulum aminopeptidase 2 (954 aa).

At 1–7 (MANSCRK) the chain is on the cytoplasmic side. A helical; Signal-anchor for type II membrane protein membrane pass occupies residues 8 to 28 (LIFNIYVVFYCSAVIMPQICI). The Lumenal portion of the chain corresponds to 29–954 (CSQFTSSPID…TLRKWLLTSI (926 aa)). N-linked (GlcNAc...) asparagine glycosylation is found at Asn-79 and Asn-113. Substrate-binding positions include Glu-194 and 328–332 (GAMEN). His-364 contacts Zn(2+). Glu-365 (proton acceptor) is an active-site residue. His-368 and Glu-387 together coordinate Zn(2+). Residue Asn-399 is glycosylated (N-linked (GlcNAc...) asparagine). Cys-415 and Cys-454 are disulfide-bonded. N-linked (GlcNAc...) asparagine glycosylation occurs at Asn-644. Residues Cys-753 and Cys-760 are joined by a disulfide bond.

This sequence belongs to the peptidase M1 family. As to quaternary structure, heterodimer with ERAP1. Requires Zn(2+) as cofactor. In terms of processing, N-glycosylated.

It localises to the endoplasmic reticulum membrane. Its function is as follows. Aminopeptidase that plays a central role in peptide trimming, a step required for the generation of most HLA class I-binding peptides. Peptide trimming is essential to customize longer precursor peptides to fit them to the correct length required for presentation on MHC class I molecules. Preferentially hydrolyzes the basic residues Arg and Lys. The protein is Endoplasmic reticulum aminopeptidase 2 (ERAP2) of Bos taurus (Bovine).